The following is a 140-amino-acid chain: Mercuric transport protein MerC (140 aa).

Residues 2–10 (GLMTRIADK) lie on the Cytoplasmic side of the membrane. The chain crosses the membrane as a helical span at residues 11-31 (TGALGSVVSAMGCAACFPALA). Hg(2+) contacts are provided by Gly-22 and Ala-25. Residues 32-46 (SFGAAIGLGFLSQYE) lie on the Periplasmic side of the membrane. A helical transmembrane segment spans residues 47-67 (GLFISRLLPLFAALAFLANAL). Residues 68–78 (GWFSHRQWLRS) are Cytoplasmic-facing. Residues 79 to 99 (LLGMIGPAIVFAATVWLLGNW) form a helical membrane-spanning segment. Residues 100–106 (WTANLMY) lie on the Periplasmic side of the membrane. The helical transmembrane segment at 107-127 (VGLALMIGVSIWDFVSPAHRR) threads the bilayer. Topologically, residues 128–140 (CGPDGCELPAKRL) are cytoplasmic.

It localises to the cell inner membrane. Uptake of Hg(2+) is decreased by iodoacetamide and iodoacetate, and is completely inhibited by the thiol-modifying reagent N-ethylmaleimide (NEM). In terms of biological role, involved in mercuric ion uptake and binding. MerC-mediated Hg(2+) uptake does not require MerP. This chain is Mercuric transport protein MerC, found in Shigella flexneri.